Reading from the N-terminus, the 307-residue chain is UDP-N-acetylenolpyruvoylglucosamine reductase (307 aa).

In terms of domain architecture, FAD-binding PCMH-type spans threonine 33–glycine 197. Arginine 176 is an active-site residue. Catalysis depends on serine 226, which acts as the Proton donor. Residue glutamate 296 is part of the active site.

The protein belongs to the MurB family. FAD is required as a cofactor.

It localises to the cytoplasm. It carries out the reaction UDP-N-acetyl-alpha-D-muramate + NADP(+) = UDP-N-acetyl-3-O-(1-carboxyvinyl)-alpha-D-glucosamine + NADPH + H(+). It participates in cell wall biogenesis; peptidoglycan biosynthesis. Its function is as follows. Cell wall formation. This chain is UDP-N-acetylenolpyruvoylglucosamine reductase, found in Staphylococcus aureus (strain Mu3 / ATCC 700698).